Reading from the N-terminus, the 399-residue chain is Phosphoglycerate kinase (399 aa).

Substrate-binding positions include 22 to 24, Arg38, 61 to 64, Arg120, and Arg153; these read DFN and HLGR. Residues Lys204, Glu326, and 352–355 each bind ATP; that span reads GGDT.

The protein belongs to the phosphoglycerate kinase family. As to quaternary structure, monomer.

The protein resides in the cytoplasm. It carries out the reaction (2R)-3-phosphoglycerate + ATP = (2R)-3-phospho-glyceroyl phosphate + ADP. It functions in the pathway carbohydrate degradation; glycolysis; pyruvate from D-glyceraldehyde 3-phosphate: step 2/5. The chain is Phosphoglycerate kinase from Pelobacter propionicus (strain DSM 2379 / NBRC 103807 / OttBd1).